We begin with the raw amino-acid sequence, 145 residues long: Large ribosomal subunit protein bL17 (145 aa).

It belongs to the bacterial ribosomal protein bL17 family. In terms of assembly, part of the 50S ribosomal subunit. Contacts protein L32.

The sequence is that of Large ribosomal subunit protein bL17 from Orientia tsutsugamushi (strain Ikeda) (Rickettsia tsutsugamushi).